Here is a 256-residue protein sequence, read N- to C-terminus: Isoprenyl transferase (256 aa).

Aspartate 33 is a catalytic residue. Residue aspartate 33 coordinates Mg(2+). Residues 34–37 (GNGR), tryptophan 38, arginine 46, histidine 50, and 78–80 (STE) contribute to the substrate site. Asparagine 81 functions as the Proton acceptor in the catalytic mechanism. Substrate-binding positions include tryptophan 82, arginine 84, arginine 201, and 207-209 (RIS). Residue glutamate 220 coordinates Mg(2+).

The protein belongs to the UPP synthase family. In terms of assembly, homodimer. Requires Mg(2+) as cofactor.

Its function is as follows. Catalyzes the condensation of isopentenyl diphosphate (IPP) with allylic pyrophosphates generating different type of terpenoids. The protein is Isoprenyl transferase of Staphylococcus aureus (strain COL).